The primary structure comprises 415 residues: Tyrosine-protein phosphatase non-receptor type 2 (415 aa).

The 271-residue stretch at 5 to 275 (IEREFEELDT…RFSYMAIIEG (271 aa)) folds into the Tyrosine-protein phosphatase domain. Y22 carries the post-translational modification Phosphotyrosine. A Phosphoserine modification is found at S52. Y68 is subject to Phosphotyrosine. Substrate is bound by residues D182, 216-222 (CSAGIGR), and Q260. Residue C216 is the Phosphocysteine intermediate of the active site. C216 is subject to S-nitrosocysteine. A phosphoserine mark is found at S293, S298, and S304. An endoplasmic reticulum location region spans residues 346-415 (ESALRKRIRE…WTLFFQQNAL (70 aa)). Residues 376–415 (ERKRKRWLYWQPILTKMGFMSVILVGAFVGWTLFFQQNAL) are mediates interaction with STX17.

Belongs to the protein-tyrosine phosphatase family. Non-receptor class 1 subfamily. Interacts with RMDN3. Isoform 1 interacts with TMED9. Isoform 1 interacts with STX17; dephosphorylates STX17. Interacts with ITGA1 (via cytoplasmic domain); activates the phosphatase activity towards EGFR. Interacts with TRAF2; probably involved in tumor necrosis factor-mediated signaling. Interacts with MET. Interacts with FAM220A and STAT3; interaction with FAM220A promotes interaction of PTPN2 with transcriptional activator STAT3, leading to dephosphorylation of STAT3 by PTPN2 and negative regulation of STAT3 transcriptional activator activity. Specifically phosphorylated in a cell cycle-dependent manner by cyclin-dependent kinases CDK1 and CDK2. Probably activated through phosphorylation by PKR. In terms of tissue distribution, ubiquitously expressed. Isoform 2 is probably the major isoform. Isoform 1 is expressed in T-cells and in placenta.

The protein localises to the endoplasmic reticulum. Its subcellular location is the endoplasmic reticulum-Golgi intermediate compartment. It is found in the nucleus. It localises to the cytoplasm. The protein resides in the cell membrane. It carries out the reaction O-phospho-L-tyrosyl-[protein] + H2O = L-tyrosyl-[protein] + phosphate. Its function is as follows. Non-receptor type tyrosine-specific phosphatase that dephosphorylates receptor protein tyrosine kinases including INSR, EGFR, CSF1R, PDGFR. Also dephosphorylates non-receptor protein tyrosine kinases like JAK1, JAK2, JAK3, Src family kinases, STAT1, STAT3 and STAT6 either in the nucleus or the cytoplasm. Negatively regulates numerous signaling pathways and biological processes like hematopoiesis, inflammatory response, cell proliferation and differentiation, and glucose homeostasis. Plays a multifaceted and important role in the development of the immune system. Functions in T-cell receptor signaling through dephosphorylation of FYN and LCK to control T-cells differentiation and activation. Dephosphorylates CSF1R, negatively regulating its downstream signaling and macrophage differentiation. Negatively regulates cytokine (IL2/interleukin-2 and interferon)-mediated signaling through dephosphorylation of the cytoplasmic kinases JAK1, JAK3 and their substrate STAT1, that propagate signaling downstream of the cytokine receptors. Also regulates the IL6/interleukin-6 and IL4/interleukin-4 cytokine signaling through dephosphorylation of STAT3 and STAT6 respectively. In addition to the immune system, it is involved in anchorage-dependent, negative regulation of EGF-stimulated cell growth. Activated by the integrin ITGA1/ITGB1, it dephosphorylates EGFR and negatively regulates EGF signaling. Dephosphorylates PDGFRB and negatively regulates platelet-derived growth factor receptor-beta signaling pathway and therefore cell proliferation. Negatively regulates tumor necrosis factor-mediated signaling downstream via MAPK through SRC dephosphorylation. May also regulate the hepatocyte growth factor receptor signaling pathway through dephosphorylation of the hepatocyte growth factor receptor MET. Also plays an important role in glucose homeostasis. For instance, negatively regulates the insulin receptor signaling pathway through the dephosphorylation of INSR and control gluconeogenesis and liver glucose production through negative regulation of the IL6 signaling pathways. May also bind DNA. The chain is Tyrosine-protein phosphatase non-receptor type 2 (PTPN2) from Homo sapiens (Human).